Here is a 397-residue protein sequence, read N- to C-terminus: MSVYRLFTVSIMDMCVLKANCKDPLGFTVEYTCVFGISSPIPGLHGGEHVNSYGEGVCVITFHNKDGRVFWFIIEKLPKKYTYPISPRFTPQDASEFCGRLADVHVFNDVTVGHLWRNRTVVSMNALEEGLLSTWSFERMVLLGDSVHKMTPNIGQGANTAIEDAAALASLIHQMINPMTPQNASKAAIGHLFQKFQDLRMSRVQSTVQRAHFGARFHTRDDHLKALVGRYIFPYVGNLVMARTVKVIGGGHKIEFLPPPKRSMPWTAQTDHSQHKMHGSKVLWAYLSHPDQHWSDDPRGTAQLRSQSLGTHRTSTVGRTLFIELVIVMIDVVYARQDIGEDVNAGVKDMAVQSRNSMRFLPYVLSYGSTESLLAAGWRQVWVFRLLSYLFGALLGL.

Y53 is a catalytic residue. Positions 145 and 158 each coordinate FAD.

Belongs to the paxM FAD-dependent monooxygenase family. FAD serves as cofactor.

Its pathway is secondary metabolite biosynthesis; terpenoid biosynthesis. Functionally, FAD-dependent monooxygenase; part of the gene cluster that mediates the biosynthesis of terretonin, a fungal meroterpenoid that acts as a mycotoxin. The first step of the pathway is the synthesis of 3,5-dimethylorsellinic acid (DMOA) by the polyketide synthase trt4. DMOA is then prenylated into farnesyl-DMOA by the polyprenyl transferase trt2. Methylation by the methyltransferase trt5 then leads to farnesyl-DMOA methyl ester which is further subject to epoxidation by the FAD-dependent monooxygenase trt8 to yield epoxyfarnesyl-DMOA methyl ester. Cyclization of epoxyfarnesyl-DMOA methyl ester by the terpene cyclase trt1 leads to a tetracycle intermediate which is in turn converted to preterretonin. Dehydrogenase trt9 comes next to transform preterretonin to preterrenoid. The FAD-dependent monooxygenase trt3 is then required for the C-hydroxylation at C16 of preterrenoid to yield terrenoid. The cytochrome P450 trt6 catalyzes three successive oxidations to transform terrenoid into an unstable intermediate, which then undergoes the D-ring expansion and unusual rearrangement of the methoxy group to afford the core skeleton of terretonin. Trt14 catalyzes the D-ring expansion of terretonin involving intramolecular methoxy rearrangement as well as the hydrolysis of the expanded D-ring and the methyl ester moiety. Finally, the nonheme iron-dependent dioxygenase trt7 accomplishes the last two oxidation reactions steps to complete the biosynthesis of terretonin. Terretonin C is produced via spontaneous decarboxylation of the terretonin precursor. Another shunt product of the terretonin biosynthesis is dihydrofarnesyl-DMOA, derived from epoxyfarnesyl-DMOA through hydrolysis of the epoxide. This chain is FAD-dependent monooxygenase trt8, found in Aspergillus terreus (strain NIH 2624 / FGSC A1156).